The following is a 208-amino-acid chain: Fusaric acid resistance protein FusD (208 aa).

The helical transmembrane segment at 7-29 (LLLSMLVSAIAFAVLFPPTAPWL) threads the bilayer.

Its subcellular location is the cell membrane. Involved in the resistance (detoxification) of the fungal toxin fusaric acid. The protein is Fusaric acid resistance protein FusD (fusD) of Burkholderia cepacia (Pseudomonas cepacia).